A 177-amino-acid polypeptide reads, in one-letter code: Protein CutA 1, chloroplastic (177 aa).

Residues 1–60 (MPLLPSPLGSLSAAATAAPRRAAAAAGLSPLLLRRRAPIAGALLFLSLGAFAGVRSLSSS) constitute a chloroplast transit peptide.

It belongs to the CutA family. In terms of assembly, homotrimer.

The protein resides in the plastid. It localises to the chloroplast. The polypeptide is Protein CutA 1, chloroplastic (CUTA1) (Oryza sativa subsp. japonica (Rice)).